The primary structure comprises 260 residues: Cytochrome c oxidase subunit 3 (260 aa).

At 1–15 (MAHQAHAYHMVDPSP) the chain is on the mitochondrial matrix side. The chain crosses the membrane as a helical span at residues 16 to 34 (WPLTGAVAALLLTSGLAMW). The Mitochondrial intermembrane segment spans residues 35–40 (FHFGSM). The helical transmembrane segment at 41–66 (ILLTLGLITMVLTMIQWWRDVIREGT) threads the bilayer. The Mitochondrial matrix segment spans residues 67-72 (FQGHHT). A helical transmembrane segment spans residues 73–105 (PPVQKGLRYGMILFITSEVFFFIGFFWAFYNSS). At 106-128 (LAPTYELGECWPPTGITPLNPFE) the chain is on the mitochondrial intermembrane side. The helical transmembrane segment at 129 to 152 (VPLLNTAVLLASGVTVTWAHHSIM) threads the bilayer. The Mitochondrial matrix portion of the chain corresponds to 153–155 (HGD). Residues 156–183 (RKEAIQSLTLTILLGLYFTALQAMEYYE) form a helical membrane-spanning segment. The Mitochondrial intermembrane portion of the chain corresponds to 184–190 (APFTIAD). The chain crosses the membrane as a helical span at residues 191–223 (GVYGSTFFVATGFHGLHVIIGSLFLSVCLLRQI). The Mitochondrial matrix segment spans residues 224-232 (QYHFTSKHH). Residues 233 to 255 (FGFEAAWYWHFVDVVWLFLYVSI) traverse the membrane as a helical segment. Residues 256–260 (YWWGS) lie on the Mitochondrial intermembrane side of the membrane.

Belongs to the cytochrome c oxidase subunit 3 family. As to quaternary structure, component of the cytochrome c oxidase (complex IV, CIV), a multisubunit enzyme composed of 14 subunits. The complex is composed of a catalytic core of 3 subunits MT-CO1, MT-CO2 and MT-CO3, encoded in the mitochondrial DNA, and 11 supernumerary subunits COX4I, COX5A, COX5B, COX6A, COX6B, COX6C, COX7A, COX7B, COX7C, COX8 and NDUFA4, which are encoded in the nuclear genome. The complex exists as a monomer or a dimer and forms supercomplexes (SCs) in the inner mitochondrial membrane with NADH-ubiquinone oxidoreductase (complex I, CI) and ubiquinol-cytochrome c oxidoreductase (cytochrome b-c1 complex, complex III, CIII), resulting in different assemblies (supercomplex SCI(1)III(2)IV(1) and megacomplex MCI(2)III(2)IV(2)).

The protein resides in the mitochondrion inner membrane. It catalyses the reaction 4 Fe(II)-[cytochrome c] + O2 + 8 H(+)(in) = 4 Fe(III)-[cytochrome c] + 2 H2O + 4 H(+)(out). In terms of biological role, component of the cytochrome c oxidase, the last enzyme in the mitochondrial electron transport chain which drives oxidative phosphorylation. The respiratory chain contains 3 multisubunit complexes succinate dehydrogenase (complex II, CII), ubiquinol-cytochrome c oxidoreductase (cytochrome b-c1 complex, complex III, CIII) and cytochrome c oxidase (complex IV, CIV), that cooperate to transfer electrons derived from NADH and succinate to molecular oxygen, creating an electrochemical gradient over the inner membrane that drives transmembrane transport and the ATP synthase. Cytochrome c oxidase is the component of the respiratory chain that catalyzes the reduction of oxygen to water. Electrons originating from reduced cytochrome c in the intermembrane space (IMS) are transferred via the dinuclear copper A center (CU(A)) of subunit 2 and heme A of subunit 1 to the active site in subunit 1, a binuclear center (BNC) formed by heme A3 and copper B (CU(B)). The BNC reduces molecular oxygen to 2 water molecules using 4 electrons from cytochrome c in the IMS and 4 protons from the mitochondrial matrix. This chain is Cytochrome c oxidase subunit 3 (mt-co3), found in Xenopus laevis (African clawed frog).